The chain runs to 330 residues: Aspartate--ammonia ligase (330 aa).

It belongs to the class-II aminoacyl-tRNA synthetase family. AsnA subfamily.

The protein localises to the cytoplasm. It catalyses the reaction L-aspartate + NH4(+) + ATP = L-asparagine + AMP + diphosphate + H(+). The protein operates within amino-acid biosynthesis; L-asparagine biosynthesis; L-asparagine from L-aspartate (ammonia route): step 1/1. This is Aspartate--ammonia ligase from Salmonella newport (strain SL254).